A 446-amino-acid polypeptide reads, in one-letter code: D(1A) dopamine receptor (446 aa).

At M1–R23 the chain is on the extracellular side. An N-linked (GlcNAc...) asparagine glycan is attached at N5. Residues I24–I49 traverse the membrane as a helical segment. Residues R50–N60 lie on the Cytoplasmic side of the membrane. Residues F61 to A87 form a helical membrane-spanning segment. The Extracellular segment spans residues G88–C96. A disulfide bridge connects residues C96 and C186. A helical membrane pass occupies residues N97–V119. Residues D120–K138 are Cytoplasmic-facing. A helical membrane pass occupies residues A139 to W163. At H164 to R192 the chain is on the extracellular side. The chain crosses the membrane as a helical span at residues T193–Y218. Topologically, residues R219–K272 are cytoplasmic. A helical membrane pass occupies residues T273–G299. Residues S300 to T312 lie on the Extracellular side of the membrane. A helical transmembrane segment spans residues F313–F337. Over R338–T446 the chain is Cytoplasmic. Residues C347 and C351 are each lipidated (S-palmitoyl cysteine).

This sequence belongs to the G-protein coupled receptor 1 family. Interacts with DNAJC14 via its C-terminus. Interacts with DRD2. Interacts with DORIP1.

It is found in the cell membrane. Its subcellular location is the endoplasmic reticulum membrane. The protein resides in the cell projection. It localises to the cilium membrane. The protein localises to the dendrite. It is found in the dendritic spine. Functionally, dopamine receptor whose activity is mediated by G proteins which activate adenylyl cyclase. In Sus scrofa (Pig), this protein is D(1A) dopamine receptor (DRD1).